Here is a 1082-residue protein sequence, read N- to C-terminus: MTHDNRQLLPQETKLVTPNKDTLSSRYLHVLIIDNTLSTIEFVYMVVKAVLTQADTLKAFEQRKNRPTNRILGLSTSVSKRYINIPKFSSSGANNSQGVKTLAAIRKFSLPDKNCFRNFLSFSTTLFKVPASIDIYFLFFTASTVSTMAARALDLEFILSSLKNSTSPESLLAATAKIEILSLAADSVTHNRVIAFINRLPPKKYHFDLIREYTVFYFLNSTTLTSENKLLSAELLHEELSQIRSSSSPGTELENLNNAEVLYVFDRILNSIKMLKNELSSPIGKLRVQPAANDPGTDKTIKYSKIQSIIQKVHSFTRENSLLANCRAVVELIDDLYRKLYSWFLHILTFEDIQFPGDTFLDRLLKMDYCFTYYPSSNRHLIDLFEKTLDNQTSTDIDKFFDTSGNSPELLYQKTFSLKIFSKNLTAQDNGLYIYPLLKTDLSILDFLGTENILFHRGLIYHILHQKTIPQERENDLNKINQFFATVIQQVIETRSSCLPASLSRLLDTIFHFNRIGLNIETCRIYVEILSNHMATPDTQPIINTFTINLIHIVFTAHVFFICMENFSPTFLFYNRKKLILEQQRAILIIERNEYSTLWKQISDHIDCLFNISLSESFFKEYTKGGNEEHKQFLYKNLFEKWGDVFFPFTYSVTTSKNSTAHHITTLELRAICKEVYQSDSPEAYESLLPYSTHPAFKTLFIKIYVIPMVTYITNLTFDKLQSDYRLITLIHACKLLLPSQHLLLHYMVWLYAFSINVDHIDLGTFTVIKSVIFKIADHINVMTHTIYSPETNLLVSILLNAYTDYLQKYVNPWIKQTITANFSLLQTYITFTKQCASILATKCNINLDNLFISMTIGTDKIVTTSFCSFIATCRNLVRQHEEFKKSLKTIETSKTTLTNMLLNIITSVSSSKELLTNEALQKFIDTVQRISQHVNETYQLISVNLEKCKISNDILIESLKKTISIVDVLSSDAILNTSLTSRCLEAATLAVSNNSFTILEIKKDAVAVFKPFITQLFESMKPTTSLYKKLMATQKLTTDRIPFLDIFDDRYNLVRHVERQLNWYAAYAEAAQQDLIAPLTF.

Positions 604–1082 are interaction with large tegument protein; that stretch reads DHIDCLFNIS…QQDLIAPLTF (479 aa).

The protein belongs to the herpesviridae inner tegument protein family. Interacts (via C-terminus) with the large tegument protein/LTP (via N-terminus).

The protein resides in the virion tegument. Its subcellular location is the host cytoplasm. The protein localises to the host nucleus. It is found in the host Golgi apparatus. It localises to the host trans-Golgi network. Its function is as follows. Plays an essential role in cytoplasmic secondary envelopment during viral egress. Interacts with the capsid via the large tegument protein/LTP and participates in its transport to the host trans-Golgi network (TGN) where secondary envelopment occurs. Modulates tegumentation and capsid accumulation at the viral assembly complex. The protein is Inner tegument protein (U30) of Homo sapiens (Human).